Reading from the N-terminus, the 1124-residue chain is DNA-directed RNA polymerase subunit Rpo2 (1124 aa).

Residues C1061, C1064, C1079, and H1082 each coordinate Zn(2+).

This sequence belongs to the RNA polymerase beta chain family. As to quaternary structure, part of the 13-subunit RNA polymerase complex. Zn(2+) is required as a cofactor.

Its subcellular location is the cytoplasm. It carries out the reaction RNA(n) + a ribonucleoside 5'-triphosphate = RNA(n+1) + diphosphate. In terms of biological role, DNA-dependent RNA polymerase (RNAP) catalyzes the transcription of DNA into RNA using the four ribonucleoside triphosphates as substrates. This subunit is involved in DNA promoter recognition. This chain is DNA-directed RNA polymerase subunit Rpo2, found in Saccharolobus solfataricus (strain ATCC 35092 / DSM 1617 / JCM 11322 / P2) (Sulfolobus solfataricus).